The following is a 327-amino-acid chain: Phenylalanine--tRNA ligase alpha subunit (327 aa).

Glu253 is a Mg(2+) binding site.

It belongs to the class-II aminoacyl-tRNA synthetase family. Phe-tRNA synthetase alpha subunit type 1 subfamily. As to quaternary structure, tetramer of two alpha and two beta subunits. It depends on Mg(2+) as a cofactor.

It localises to the cytoplasm. The catalysed reaction is tRNA(Phe) + L-phenylalanine + ATP = L-phenylalanyl-tRNA(Phe) + AMP + diphosphate + H(+). This chain is Phenylalanine--tRNA ligase alpha subunit, found in Laribacter hongkongensis (strain HLHK9).